A 361-amino-acid polypeptide reads, in one-letter code: Cytochrome c peroxidase, mitochondrial (361 aa).

The N-terminal 67 residues, 1–67 (MTTAVRLLPS…NWGKAAALAS (67 aa)), are a transit peptide targeting the mitochondrion. His-119 serves as the catalytic Proton acceptor. Tyr-220 carries the phosphotyrosine modification. His-242 lines the heme b pocket. Catalysis depends on Trp-258, which acts as the Tryptophan radical intermediate.

This sequence belongs to the peroxidase family. Cytochrome c peroxidase subfamily. In terms of assembly, forms a one-to-one complex with cytochrome c. It depends on heme b as a cofactor. In terms of processing, CCP1 precursor is processed by the rhomboid protease PCP1, which cleaves the N-terminal hydrophobic transit peptide. The m-AAA protease (composed of YTA12/RCA1 and YTA10/AFG3) is required for CCP1 maturation: m-AAA protease promotes membrane dislocation of the CCP1 transmembrane segment within the transit peptide to ensure the correct positioning of CCP1 within the membrane bilayer, allowing intramembrane cleavage by PCP1.

Its subcellular location is the mitochondrion matrix. It localises to the mitochondrion intermembrane space. It carries out the reaction 2 Fe(II)-[cytochrome c] + H2O2 + 2 H(+) = 2 Fe(III)-[cytochrome c] + 2 H2O. Functionally, destroys radicals which are normally produced within the cells and which are toxic to biological systems. The polypeptide is Cytochrome c peroxidase, mitochondrial (CCP1) (Saccharomyces cerevisiae (strain ATCC 204508 / S288c) (Baker's yeast)).